A 161-amino-acid polypeptide reads, in one-letter code: Small ribosomal subunit protein uS15 (161 aa).

Residues M1 to S13 are compositionally biased toward basic residues. The interval M1–P22 is disordered.

The protein belongs to the universal ribosomal protein uS15 family. Part of the 30S ribosomal subunit.

The protein is Small ribosomal subunit protein uS15 of Hyperthermus butylicus (strain DSM 5456 / JCM 9403 / PLM1-5).